The following is a 151-amino-acid chain: Large-conductance mechanosensitive channel (151 aa).

A run of 2 helical transmembrane segments spans residues 12–32 and 71–91; these read GNIV…ALVT and VLLS…FLVV. Residues 125–151 are disordered; sequence NSNSSGRHEAPGTAGTPPPNYGPRADT.

The protein belongs to the MscL family. As to quaternary structure, homopentamer.

It is found in the cell membrane. Channel that opens in response to stretch forces in the membrane lipid bilayer. May participate in the regulation of osmotic pressure changes within the cell. The chain is Large-conductance mechanosensitive channel from Mycobacterium ulcerans (strain Agy99).